The primary structure comprises 274 residues: MNRVTPDRPLSRIDGHAHAWTPRKARARFRWGVFGPTAGVAAGHTQANLISLPADWAYDMLLFCQRNPKPCPVLDVTDAGSWTTPLAEGADLRTDLPRYRVWENGELVAEPTDVVAYWRDDLVSFLIGCSFTFEWALSEAGVPMRHIEQGRNVSMYVTSRACRPAGRLHGPMVVSMRPVPPEHLAAAIRESTMLPAVHGSPVHCGDPSGLGIDDLGRPDFGDPVDAEPDDIPVFWACGVTPQAAVMASRPPFAITHAPGQMFLTDARDEQYRVA.

It belongs to the D-glutamate cyclase family.

The sequence is that of Putative hydro-lyase SAV_6940 from Streptomyces avermitilis (strain ATCC 31267 / DSM 46492 / JCM 5070 / NBRC 14893 / NCIMB 12804 / NRRL 8165 / MA-4680).